Consider the following 288-residue polypeptide: MQRRWVFVLLDVLCLLVASLPFAILTLVNAPYKRGFYCGDDSIRYPYRPDTITHGLMAGVTITATVILVSAGEAYLVYTDRLYSRSDFNNYVAAVYKVLGTFLFGAAVSQSLTDLAKYMIGRLRPNFLAVCDPDWSRVNCSVYVQLEKVCRGNPADVTEARLSFYSGHSSFGMYCMVFLALYVQARLCWKWARLLRPTVQFFLVAFALYVGYTRVSDYKHHWSDVLVGLLQGALVAALTVCYISDFFKARPPQHCLKEEELERKPSLSLTLTLGEADHNHYGYPHSSS.

At 1 to 4 (MQRR) the chain is on the cytoplasmic side. The chain crosses the membrane as a helical span at residues 5-25 (WVFVLLDVLCLLVASLPFAIL). At 26–51 (TLVNAPYKRGFYCGDDSIRYPYRPDT) the chain is on the lumenal side. The helical transmembrane segment at 52–72 (ITHGLMAGVTITATVILVSAG) threads the bilayer. The Cytoplasmic portion of the chain corresponds to 73 to 87 (EAYLVYTDRLYSRSD). A helical transmembrane segment spans residues 88 to 108 (FNNYVAAVYKVLGTFLFGAAV). The Lumenal portion of the chain corresponds to 109-162 (SQSLTDLAKYMIGRLRPNFLAVCDPDWSRVNCSVYVQLEKVCRGNPADVTEARL). The phosphatase sequence motif I stretch occupies residues 117 to 125 (KYMIGRLRP). Asn-139 carries an N-linked (GlcNAc...) asparagine glycan. A helical membrane pass occupies residues 163 to 183 (SFYSGHSSFGMYCMVFLALYV). Residues 165–168 (YSGH) form a phosphatase sequence motif II region. Catalysis depends on His-168, which acts as the Proton donors. Topologically, residues 184 to 196 (QARLCWKWARLLR) are cytoplasmic. Residues 197–217 (PTVQFFLVAFALYVGYTRVSD) traverse the membrane as a helical segment. The interval 213-224 (TRVSDYKHHWSD) is phosphatase sequence motif III. Over 218 to 226 (YKHHWSDVL) the chain is Lumenal. The active-site Nucleophile is the His-220. Residues 227–247 (VGLLQGALVAALTVCYISDFF) traverse the membrane as a helical segment. Residues 248-288 (KARPPQHCLKEEELERKPSLSLTLTLGEADHNHYGYPHSSS) lie on the Cytoplasmic side of the membrane.

Belongs to the PA-phosphatase related phosphoesterase family. In terms of assembly, forms functional homodimers and homooligomers. Can also form heterooligomers with PLPP1 and PLPP3. In terms of processing, N-glycosylated. Found mainly in brain, pancreas and placenta.

The protein resides in the membrane. Its subcellular location is the cell membrane. It localises to the early endosome membrane. The protein localises to the endoplasmic reticulum membrane. The enzyme catalyses a 1,2-diacyl-sn-glycero-3-phosphate + H2O = a 1,2-diacyl-sn-glycerol + phosphate. It catalyses the reaction 1,2-dihexadecanoyl-sn-glycero-3-phosphate + H2O = 1,2-dihexadecanoyl-sn-glycerol + phosphate. It carries out the reaction 1,2-di-(9Z-octadecenoyl)-sn-glycero-3-phosphate + H2O = 1,2-di-(9Z-octadecenoyl)-sn-glycerol + phosphate. The catalysed reaction is a monoacyl-sn-glycero-3-phosphate + H2O = a monoacylglycerol + phosphate. The enzyme catalyses (9Z)-octadecenoyl-sn-glycero-3-phosphate + H2O = (9Z-octadecenoyl)-glycerol + phosphate. It catalyses the reaction sphing-4-enine 1-phosphate + H2O = sphing-4-enine + phosphate. It carries out the reaction an N-acylsphing-4-enine 1-phosphate + H2O = an N-acylsphing-4-enine + phosphate. The catalysed reaction is N-(octanoyl)-sphing-4-enine-1-phosphate + H2O = N-octanoylsphing-4-enine + phosphate. The enzyme catalyses N-(9Z-octadecenoyl)-ethanolamine phosphate + H2O = N-(9Z-octadecenoyl) ethanolamine + phosphate. It participates in lipid metabolism; phospholipid metabolism. Its activity is regulated as follows. Magnesium-independent phospholipid phosphatase. Insensitive to N-ethylmaleimide. Inhibited by sphingosine, zinc ions and modestly by propanolol. In terms of biological role, magnesium-independent phospholipid phosphatase that catalyzes the dephosphorylation of a variety of glycerolipid and sphingolipid phosphate esters including phosphatidate/PA, lysophosphatidate/LPA, sphingosine 1-phosphate/S1P and ceramide 1-phosphate/C1P. Has no apparent extracellular phosphatase activity and therefore most probably acts intracellularly. Also acts on N-oleoyl ethanolamine phosphate/N-(9Z-octadecenoyl)-ethanolamine phosphate, a potential physiological compound. Through dephosphorylation of these bioactive lipid mediators produces new bioactive compounds and may regulate signal transduction in different cellular processes. Indirectly regulates, for instance, cell cycle G1/S phase transition through its phospholipid phosphatase activity. This chain is Phospholipid phosphatase 2, found in Homo sapiens (Human).